A 298-amino-acid polypeptide reads, in one-letter code: Small ribosomal subunit biogenesis GTPase RsgA (298 aa).

Residues 67–228 (TNELIRPPIC…VADTPGFSSL (162 aa)) form the CP-type G domain. A GTP-binding site is contributed by 116-119 (TKMD). At Thr-166 the chain carries Phosphothreonine. Residue 171–179 (GQSGVGKSS) participates in GTP binding. Zn(2+)-binding residues include Cys-252, Cys-257, His-259, and Cys-265.

The protein belongs to the TRAFAC class YlqF/YawG GTPase family. RsgA subfamily. In terms of assembly, monomer, but able to form dimers. Associates with 30S ribosomal subunit; a phospho-mimetic mutation increases association. Probably binds 16S rRNA. Requires Zn(2+) as cofactor. Post-translationally, in vitro phosphorylated mostly on Thr (with lower signal on Ser) by PrkC in the presence of poly-L-Lys or myelin basic protein, dephosphorylated by PrpC. Most in vitro phosphorylation occurs on Thr-166, in vivo phosphorylation has not been detected, but it might vary during the cell cycle.

It is found in the cytoplasm. In terms of biological role, one of several proteins that assist in the late maturation steps of the functional core of the 30S ribosomal subunit. Helps release RbfA from mature subunits. May play a role in the assembly of ribosomal proteins into the subunit. Circularly permuted GTPase with a low level of activity and slow catalytic turnover, does not act on ATP. GTPase activity is stimulated by the presence of 30S or 70S ribosomes, phosphorylation increases stimulation. Depletion results in increased sensitivity to protein synthesis inhibitors that block the peptide channel or peptidyl transferase center on the ribosome, suggesting this protein functions in conjunction with the ribosome in vivo. Decreasing levels of protein lead to an increase in free 30S and 50S ribosomal subunits and a decrease in assembled 70S ribosomes. Suggested to serve as a specific transcription factor for proteins involved in late stages of peptidoglycan synthesis. The polypeptide is Small ribosomal subunit biogenesis GTPase RsgA (Bacillus subtilis (strain 168)).